The chain runs to 61 residues: Small ribosomal subunit protein uS14 (61 aa).

Zn(2+) is bound by residues C24, C27, C40, and C43.

This sequence belongs to the universal ribosomal protein uS14 family. Zinc-binding uS14 subfamily. In terms of assembly, part of the 30S ribosomal subunit. Contacts proteins S3 and S10. Zn(2+) is required as a cofactor.

Functionally, binds 16S rRNA, required for the assembly of 30S particles and may also be responsible for determining the conformation of the 16S rRNA at the A site. The chain is Small ribosomal subunit protein uS14 from Clostridium acetobutylicum (strain ATCC 824 / DSM 792 / JCM 1419 / IAM 19013 / LMG 5710 / NBRC 13948 / NRRL B-527 / VKM B-1787 / 2291 / W).